Reading from the N-terminus, the 79-residue chain is Protein VdcD (79 aa).

Functionally, involved in the non-oxidative decarboxylation and detoxification of phenolic derivatives under both aerobic and anaerobic conditions, however the precise biochemical function of VdcD in metabolism of phenolic acid is unknown. The chain is Protein VdcD from Streptomyces sp. (strain D7).